Here is a 166-residue protein sequence, read N- to C-terminus: Ribosome maturation factor RimM (166 aa).

Positions 94–166 (GDEYYWRDLM…EMVVRLLPGL (73 aa)) constitute a PRC barrel domain.

It belongs to the RimM family. In terms of assembly, binds ribosomal protein uS19.

Its subcellular location is the cytoplasm. Its function is as follows. An accessory protein needed during the final step in the assembly of 30S ribosomal subunit, possibly for assembly of the head region. Essential for efficient processing of 16S rRNA. May be needed both before and after RbfA during the maturation of 16S rRNA. It has affinity for free ribosomal 30S subunits but not for 70S ribosomes. In Syntrophus aciditrophicus (strain SB), this protein is Ribosome maturation factor RimM.